The sequence spans 417 residues: Gamma-glutamyl phosphate reductase (417 aa).

This sequence belongs to the gamma-glutamyl phosphate reductase family.

Its subcellular location is the cytoplasm. It carries out the reaction L-glutamate 5-semialdehyde + phosphate + NADP(+) = L-glutamyl 5-phosphate + NADPH + H(+). It functions in the pathway amino-acid biosynthesis; L-proline biosynthesis; L-glutamate 5-semialdehyde from L-glutamate: step 2/2. Its function is as follows. Catalyzes the NADPH-dependent reduction of L-glutamate 5-phosphate into L-glutamate 5-semialdehyde and phosphate. The product spontaneously undergoes cyclization to form 1-pyrroline-5-carboxylate. This Sodalis glossinidius (strain morsitans) protein is Gamma-glutamyl phosphate reductase.